A 110-amino-acid polypeptide reads, in one-letter code: V-type proton ATPase subunit G1 (110 aa).

N-acetylmethionine is present on Met-1. A disordered region spans residues 60–80; it reads KLEETSGDSGANVKRLEQETD.

This sequence belongs to the V-ATPase G subunit family. V-ATPase is a heteromultimeric enzyme composed of a peripheral catalytic V1 complex (components A to H) attached to an integral membrane V0 proton pore complex (components: a, c, c'', d and e).

The protein resides in the cell membrane. The protein localises to the vacuole membrane. In terms of biological role, catalytic subunit of the peripheral V1 complex of vacuolar ATPase (V-ATPase). V-ATPase is responsible for acidifying a variety of intracellular compartments in eukaryotic cells. The sequence is that of V-type proton ATPase subunit G1 (VHA-G1) from Arabidopsis thaliana (Mouse-ear cress).